The primary structure comprises 300 residues: Ribosomal protein L11 methyltransferase (300 aa).

Positions 152, 173, 195, and 234 each coordinate S-adenosyl-L-methionine.

It belongs to the methyltransferase superfamily. PrmA family.

It localises to the cytoplasm. It carries out the reaction L-lysyl-[protein] + 3 S-adenosyl-L-methionine = N(6),N(6),N(6)-trimethyl-L-lysyl-[protein] + 3 S-adenosyl-L-homocysteine + 3 H(+). Methylates ribosomal protein L11. This Burkholderia cenocepacia (strain ATCC BAA-245 / DSM 16553 / LMG 16656 / NCTC 13227 / J2315 / CF5610) (Burkholderia cepacia (strain J2315)) protein is Ribosomal protein L11 methyltransferase.